Reading from the N-terminus, the 92-residue chain is Defensin-like protein 294 (92 aa).

The signal sequence occupies residues 1-26; sequence MASRATSLFIFFFLISCTFMLLETNA. Cystine bridges form between Cys-63-Cys-82, Cys-69-Cys-87, and Cys-75-Cys-89.

Belongs to the DEFL family.

The protein resides in the secreted. The protein is Defensin-like protein 294 of Arabidopsis thaliana (Mouse-ear cress).